A 164-amino-acid polypeptide reads, in one-letter code: Protein 4 (164 aa).

In Lettuce big-vein associated virus (isolate Japan/Kagawa) (LBVaV), this protein is Protein 4.